The chain runs to 703 residues: Elongation factor G (703 aa).

The tr-type G domain occupies Glu-9–Leu-292. Residues Ala-18–Thr-25, Asp-91–His-95, and Asn-145–Asp-148 contribute to the GTP site.

The protein belongs to the TRAFAC class translation factor GTPase superfamily. Classic translation factor GTPase family. EF-G/EF-2 subfamily.

The protein resides in the cytoplasm. In terms of biological role, catalyzes the GTP-dependent ribosomal translocation step during translation elongation. During this step, the ribosome changes from the pre-translocational (PRE) to the post-translocational (POST) state as the newly formed A-site-bound peptidyl-tRNA and P-site-bound deacylated tRNA move to the P and E sites, respectively. Catalyzes the coordinated movement of the two tRNA molecules, the mRNA and conformational changes in the ribosome. This chain is Elongation factor G, found in Leuconostoc mesenteroides subsp. mesenteroides (strain ATCC 8293 / DSM 20343 / BCRC 11652 / CCM 1803 / JCM 6124 / NCDO 523 / NBRC 100496 / NCIMB 8023 / NCTC 12954 / NRRL B-1118 / 37Y).